The primary structure comprises 102 residues: UPF0751 protein DSY4013 (102 aa).

Belongs to the UPF0751 family.

The polypeptide is UPF0751 protein DSY4013 (Desulfitobacterium hafniense (strain Y51)).